We begin with the raw amino-acid sequence, 373 residues long: MEFKVEYKSANARACRIKTTHSEILTPAFMPVGTLAAIKSLDAIDMSEILDAKIILANTYHLYLRPSSKVIKQMGGLHGFSKFDRSFLTDSGGFQAFSLNKISKPDEEGIKFKSHIDGSLHYFTPKSVLDAQYDFNSDIMMILDDLVALPASKERIELSLKRTIKWAKEAIDYHKLKQNQGVGMGQNIFGIIQGGTDFEARRICSQALCEMDFDGLAIGGLSVGEENEVMYDTVEAMMPYVDNNRPRYLMGVGTPEDLVENVARGVDMFDCVMPTRNARNGTLFTSFGKFNIKKAEFITDHSPIDSKCSCYTCKNFSRAYLNHLFKAKELTFFRLASLHNLHYYLNLAKQMREAIIKNEFENFKKEFYRQRTC.

The Proton acceptor role is filled by D90. Substrate-binding positions include 90-94 (DSGGF), D144, Q193, and G220. The tract at residues 251-257 (GVGTPED) is RNA binding. Residue D270 is the Nucleophile of the active site. Positions 275–279 (TRNAR) are RNA binding; important for wobble base 34 recognition. 4 residues coordinate Zn(2+): C308, C310, C313, and H339.

This sequence belongs to the queuine tRNA-ribosyltransferase family. Homodimer. Within each dimer, one monomer is responsible for RNA recognition and catalysis, while the other monomer binds to the replacement base PreQ1. It depends on Zn(2+) as a cofactor.

The catalysed reaction is 7-aminomethyl-7-carbaguanine + guanosine(34) in tRNA = 7-aminomethyl-7-carbaguanosine(34) in tRNA + guanine. It participates in tRNA modification; tRNA-queuosine biosynthesis. In terms of biological role, catalyzes the base-exchange of a guanine (G) residue with the queuine precursor 7-aminomethyl-7-deazaguanine (PreQ1) at position 34 (anticodon wobble position) in tRNAs with GU(N) anticodons (tRNA-Asp, -Asn, -His and -Tyr). Catalysis occurs through a double-displacement mechanism. The nucleophile active site attacks the C1' of nucleotide 34 to detach the guanine base from the RNA, forming a covalent enzyme-RNA intermediate. The proton acceptor active site deprotonates the incoming PreQ1, allowing a nucleophilic attack on the C1' of the ribose to form the product. After dissociation, two additional enzymatic reactions on the tRNA convert PreQ1 to queuine (Q), resulting in the hypermodified nucleoside queuosine (7-(((4,5-cis-dihydroxy-2-cyclopenten-1-yl)amino)methyl)-7-deazaguanosine). This chain is Queuine tRNA-ribosyltransferase, found in Campylobacter lari (strain RM2100 / D67 / ATCC BAA-1060).